The chain runs to 94 residues: Small ribosomal subunit protein uS17 (94 aa).

The interval 1–22 (MSEQTSAASTTDRGDRKTRRGY) is disordered.

The protein belongs to the universal ribosomal protein uS17 family. In terms of assembly, part of the 30S ribosomal subunit.

Functionally, one of the primary rRNA binding proteins, it binds specifically to the 5'-end of 16S ribosomal RNA. The polypeptide is Small ribosomal subunit protein uS17 (Kineococcus radiotolerans (strain ATCC BAA-149 / DSM 14245 / SRS30216)).